The sequence spans 409 residues: Argininosuccinate synthase (409 aa).

Residues 12–20 and Ala-39 contribute to the ATP site; that span reads AYSGGLDTS. Residue Tyr-91 participates in L-citrulline binding. Gly-121 serves as a coordination point for ATP. Residues Thr-123, Asn-127, and Asp-128 each coordinate L-aspartate. Asn-127 provides a ligand contact to L-citrulline. The L-citrulline site is built by Arg-131, Ser-180, Ser-189, Glu-265, and Tyr-277.

This sequence belongs to the argininosuccinate synthase family. Type 1 subfamily. In terms of assembly, homotetramer.

The protein resides in the cytoplasm. It catalyses the reaction L-citrulline + L-aspartate + ATP = 2-(N(omega)-L-arginino)succinate + AMP + diphosphate + H(+). It functions in the pathway amino-acid biosynthesis; L-arginine biosynthesis; L-arginine from L-ornithine and carbamoyl phosphate: step 2/3. This chain is Argininosuccinate synthase, found in Buchnera aphidicola subsp. Baizongia pistaciae (strain Bp).